The chain runs to 159 residues: Transcriptional repressor NrdR (159 aa).

Residues 3-34 (CPFCGAEDTSVVDSRISEEGARIRRRRRCVEC) fold into a zinc finger. The ATP-cone domain occupies 49-139 (PQVIKQDGNR…VYRSFEDVGD (91 aa)).

This sequence belongs to the NrdR family. Zn(2+) serves as cofactor.

In terms of biological role, negatively regulates transcription of bacterial ribonucleotide reductase nrd genes and operons by binding to NrdR-boxes. The polypeptide is Transcriptional repressor NrdR (Nitrosomonas europaea (strain ATCC 19718 / CIP 103999 / KCTC 2705 / NBRC 14298)).